The primary structure comprises 376 residues: Aminomethyltransferase (376 aa).

It belongs to the GcvT family. The glycine cleavage system is composed of four proteins: P, T, L and H.

The catalysed reaction is N(6)-[(R)-S(8)-aminomethyldihydrolipoyl]-L-lysyl-[protein] + (6S)-5,6,7,8-tetrahydrofolate = N(6)-[(R)-dihydrolipoyl]-L-lysyl-[protein] + (6R)-5,10-methylene-5,6,7,8-tetrahydrofolate + NH4(+). Its function is as follows. The glycine cleavage system catalyzes the degradation of glycine. The polypeptide is Aminomethyltransferase (Nostoc sp. (strain PCC 7120 / SAG 25.82 / UTEX 2576)).